Consider the following 336-residue polypeptide: 4-hydroxy-2-oxovalerate aldolase (336 aa).

Residues 4 to 254 enclose the Pyruvate carboxyltransferase domain; that stretch reads PRLTDTTLRD…NPGLDVLALM (251 aa). 12–13 is a binding site for substrate; sequence RD. Asp13 provides a ligand contact to Mn(2+). Catalysis depends on His16, which acts as the Proton acceptor. Ser166 and His193 together coordinate substrate. Residues His193 and His195 each contribute to the Mn(2+) site. Tyr284 is a binding site for substrate.

Belongs to the 4-hydroxy-2-oxovalerate aldolase family.

The catalysed reaction is (S)-4-hydroxy-2-oxopentanoate = acetaldehyde + pyruvate. The protein is 4-hydroxy-2-oxovalerate aldolase of Roseiflexus castenholzii (strain DSM 13941 / HLO8).